Here is a 273-residue protein sequence, read N- to C-terminus: Glutamate transport system permease protein GluD (273 aa).

Helical transmembrane passes span 26 to 46, 64 to 84, 100 to 120, 150 to 170, and 200 to 220; these read ILPG…LALV, WFCA…LMIF, LAFA…IAEI, ILLP…MVIA, and LAAL…LTAL. An ABC transmembrane type-1 domain is found at 30–221; it reads LWGTLKSAVF…VLNFSLTALA (192 aa). The segment at 242–273 is disordered; the sequence is PEQPDQGLETKDNVNVDWQDPDYKDLKTPGVQ. Positions 262 to 273 are enriched in basic and acidic residues; sequence PDYKDLKTPGVQ.

It belongs to the binding-protein-dependent transport system permease family. HisMQ subfamily. In terms of assembly, the complex is composed of two ATP-binding proteins (GluA), two transmembrane proteins (GluC and GluD) and a solute-binding protein (GluB).

The protein localises to the cell membrane. Part of the ABC transporter complex GluABCD involved in glutamate uptake. Probably responsible for the translocation of the substrate across the membrane. In Corynebacterium glutamicum (strain ATCC 13032 / DSM 20300 / JCM 1318 / BCRC 11384 / CCUG 27702 / LMG 3730 / NBRC 12168 / NCIMB 10025 / NRRL B-2784 / 534), this protein is Glutamate transport system permease protein GluD.